Consider the following 2450-residue polypeptide: Tetratricopeptide repeat protein 28 (2450 aa).

The residue at position 1 (methionine 1) is an N-acetylmethionine. Residues 1–36 are disordered; sequence MEQPPPLAPEPASARSRRRREPESPPAPIPLFGART. Phosphoserine is present on serine 24. 28 TPR repeats span residues 52–85, 87–119, 120–153, 190–223, 228–261, 268–301, 308–341, 348–381, 388–421, 428–461, 468–501, 508–541, 548–581, 588–621, 628–661, 668–701, 708–741, 748–781, 788–821, 828–861, 871–904, 911–944, 951–984, 991–1024, 1031–1064, 1071–1104, 1111–1144, and 1163–1196; these read FVEK…DPQN, ILYS…NPKW, PKAY…DPKS, FVVV…GTCS, GSVF…AKTL, CRAH…AMKL, SSAL…AKQS, AREL…AKDL, ARAY…AQEL, MRAY…AEDL, GRAS…AQEL, GRAY…SMEV, ASTH…AREL, ARAL…APDL, GKVC…AKDL, AKAY…AQSL, FRAL…SHHV, ASAY…YQEL, CRAH…GRKL, AQVY…LQQL, GRAY…AQSL, AKAY…AHEL, AQAY…ARDM, SDAA…AEET, GRAY…AAQM, TVSY…AEQL, AKIR…FETI, and TSSY…AFAD. Positions 1362–1381 are disordered; that stretch reads SGTVSPSKDGTSSLPRRQNS. Phosphoserine occurs at positions 1584 and 2098. The interval 2001–2364 is disordered; that stretch reads KPEGGLEGGG…GTLTSKRDVL (364 aa). Residues 2090–2116 show a composition bias toward polar residues; the sequence is SVSSKGSVSTPNSPVKMTLIPSPNSPF. A compositionally biased stretch (low complexity) spans 2124 to 2140; that stretch reads SSDTGESDQSSTETDST. Over residues 2143 to 2153 the composition is skewed to basic and acidic residues; that stretch reads SQEESTPKLDP. The segment covering 2191–2206 has biased composition (polar residues); sequence APSSTTVFRASETSAF. Serine 2216 carries the post-translational modification Phosphoserine. The segment covering 2229–2245 has biased composition (polar residues); sequence ARSSSLPKVSSPATSEV. Low complexity-rich tracts occupy residues 2252 to 2262 and 2296 to 2320; these read SPPGSSHPSPG and SPAC…SPAD. Serine 2365 and serine 2370 each carry phosphoserine.

As to quaternary structure, interacts with AURKB. As to expression, expressed in embryos at all stages examined. In adult tissues, detected in heart and at low levels in kidney and testis.

It is found in the cytoplasm. Its subcellular location is the cytoskeleton. The protein localises to the microtubule organizing center. The protein resides in the centrosome. It localises to the spindle. It is found in the spindle pole. Its subcellular location is the midbody. Its function is as follows. During mitosis, may be involved in the condensation of spindle midzone microtubules, leading to the formation of midbody. Functionally, essential for the formation and integrity of the midbody. Max play a critical role in the progress of mitosis and cytokinesis during cell cycle. This is Tetratricopeptide repeat protein 28 (Ttc28) from Mus musculus (Mouse).